Consider the following 100-residue polypeptide: NADH-quinone oxidoreductase subunit K 1 (100 aa).

3 helical membrane-spanning segments follow: residues 4 to 24 (LNNY…GVLV), 29 to 49 (IVIF…FIAF), and 60 to 80 (IFVF…LALM).

Belongs to the complex I subunit 4L family. As to quaternary structure, NDH-1 is composed of 14 different subunits. Subunits NuoA, H, J, K, L, M, N constitute the membrane sector of the complex.

It localises to the cell inner membrane. The enzyme catalyses a quinone + NADH + 5 H(+)(in) = a quinol + NAD(+) + 4 H(+)(out). In terms of biological role, NDH-1 shuttles electrons from NADH, via FMN and iron-sulfur (Fe-S) centers, to quinones in the respiratory chain. The immediate electron acceptor for the enzyme in this species is believed to be ubiquinone. Couples the redox reaction to proton translocation (for every two electrons transferred, four hydrogen ions are translocated across the cytoplasmic membrane), and thus conserves the redox energy in a proton gradient. The chain is NADH-quinone oxidoreductase subunit K 1 from Geotalea daltonii (strain DSM 22248 / JCM 15807 / FRC-32) (Geobacter daltonii).